Consider the following 173-residue polypeptide: Bifunctional protein PyrR (173 aa).

The PRPP-binding motif lies at 93 to 105 (VILIDDVLYTGRT).

The protein belongs to the purine/pyrimidine phosphoribosyltransferase family. PyrR subfamily. Homodimer and homohexamer; in equilibrium.

The catalysed reaction is UMP + diphosphate = 5-phospho-alpha-D-ribose 1-diphosphate + uracil. Its function is as follows. Regulates transcriptional attenuation of the pyrimidine nucleotide (pyr) operon by binding in a uridine-dependent manner to specific sites on pyr mRNA. This disrupts an antiterminator hairpin in the RNA and favors formation of a downstream transcription terminator, leading to a reduced expression of downstream genes. In terms of biological role, also displays a weak uracil phosphoribosyltransferase activity which is not physiologically significant. The sequence is that of Bifunctional protein PyrR from Streptococcus pyogenes serotype M49 (strain NZ131).